The sequence spans 1407 residues: DNA-directed RNA polymerase subunit beta' (1407 aa).

4 residues coordinate Zn(2+): Cys70, Cys72, Cys85, and Cys88. Positions 460, 462, and 464 each coordinate Mg(2+). Zn(2+) contacts are provided by Cys814, Cys888, Cys895, and Cys898.

This sequence belongs to the RNA polymerase beta' chain family. As to quaternary structure, the RNAP catalytic core consists of 2 alpha, 1 beta, 1 beta' and 1 omega subunit. When a sigma factor is associated with the core the holoenzyme is formed, which can initiate transcription. The cofactor is Mg(2+). It depends on Zn(2+) as a cofactor.

It catalyses the reaction RNA(n) + a ribonucleoside 5'-triphosphate = RNA(n+1) + diphosphate. DNA-dependent RNA polymerase catalyzes the transcription of DNA into RNA using the four ribonucleoside triphosphates as substrates. This chain is DNA-directed RNA polymerase subunit beta', found in Cronobacter sakazakii (strain ATCC BAA-894) (Enterobacter sakazakii).